The chain runs to 198 residues: MPIGVPKVPYRLPGEPYTQWIDIYNRLYRERIIFLGKEVDDEIANQIVAVMLYLDSEDPGKDIMLYINSPGGSVTAGMAIYDTMQHIKSDVVTICVGLAASMGSFLLAAGTKGKRLALPHSRIMIHQPSGGTRGQATDIEIEAREILRVRRQLNELYAYHTGQPLEKIERDMDRDFFMSAEEAKNYGLIDRVIEERSN.

Serine 101 functions as the Nucleophile in the catalytic mechanism. Histidine 126 is an active-site residue.

It belongs to the peptidase S14 family. As to quaternary structure, fourteen ClpP subunits assemble into 2 heptameric rings which stack back to back to give a disk-like structure with a central cavity, resembling the structure of eukaryotic proteasomes.

Its subcellular location is the cytoplasm. It catalyses the reaction Hydrolysis of proteins to small peptides in the presence of ATP and magnesium. alpha-casein is the usual test substrate. In the absence of ATP, only oligopeptides shorter than five residues are hydrolyzed (such as succinyl-Leu-Tyr-|-NHMec, and Leu-Tyr-Leu-|-Tyr-Trp, in which cleavage of the -Tyr-|-Leu- and -Tyr-|-Trp bonds also occurs).. Cleaves peptides in various proteins in a process that requires ATP hydrolysis. Has a chymotrypsin-like activity. Plays a major role in the degradation of misfolded proteins. This chain is ATP-dependent Clp protease proteolytic subunit 2, found in Thermosynechococcus vestitus (strain NIES-2133 / IAM M-273 / BP-1).